Reading from the N-terminus, the 252-residue chain is 5-oxoprolinase subunit A (252 aa).

It belongs to the LamB/PxpA family. Forms a complex composed of PxpA, PxpB and PxpC.

The catalysed reaction is 5-oxo-L-proline + ATP + 2 H2O = L-glutamate + ADP + phosphate + H(+). Functionally, catalyzes the cleavage of 5-oxoproline to form L-glutamate coupled to the hydrolysis of ATP to ADP and inorganic phosphate. The protein is 5-oxoprolinase subunit A of Staphylococcus epidermidis (strain ATCC 35984 / DSM 28319 / BCRC 17069 / CCUG 31568 / BM 3577 / RP62A).